A 212-amino-acid polypeptide reads, in one-letter code: Nitrile hydratase subunit beta (212 aa).

The protein belongs to the nitrile hydratase subunit beta family. Heterodimer of an alpha and a beta chain.

It carries out the reaction an aliphatic primary amide = an aliphatic nitrile + H2O. Functionally, NHase catalyzes the hydration of various nitrile compounds to the corresponding amides. In Rhodococcus erythropolis (Arthrobacter picolinophilus), this protein is Nitrile hydratase subunit beta (nthB).